The following is a 54-amino-acid chain: Light-harvesting protein B-880 beta chain (54 aa).

Over 1-20 (AEDRSSLSGVSDAEAKEFHA) the chain is Cytoplasmic. H19 and H37 together coordinate a bacteriochlorophyll. The chain crosses the membrane as a helical span at residues 21–43 (LFVSSFMGFMVVAVLAHVLAWAW). Residues 44–54 (RPWIPGPKGWA) are Periplasmic-facing.

Belongs to the antenna complex beta subunit family. The core complex is formed by different alpha and beta chains, binding bacteriochlorophyll molecules, and arranged most probably in tetrameric structures disposed around the reaction center. The non-pigmented gamma chains may constitute additional components.

It is found in the cell inner membrane. Antenna complexes are light-harvesting systems, which transfer the excitation energy to the reaction centers. The sequence is that of Light-harvesting protein B-880 beta chain from Rhodoblastus acidophilus (Rhodopseudomonas acidophila).